Consider the following 605-residue polypeptide: Protein cueball (605 aa).

The N-terminal stretch at 1-31 (MAYIDQKHNTFWDDFAIALRDKIVFLNSTWG) is a signal peptide. Asn-27, Asn-64, and Asn-85 each carry an N-linked (GlcNAc...) asparagine glycan. Residues 32-486 (EIHASAHRFE…QCGPAPPVQG (455 aa)) are Extracellular-facing. LDL-receptor class B repeat units lie at residues 53-97 (EMIY…DPLN), 98-145 (RNLF…DICR), 146-190 (RQLY…DQLS), and 191-236 (DRIF…NEDA). Residues Asn-261 and Asn-314 are each glycosylated (N-linked (GlcNAc...) asparagine). EGF-like domains lie at 322–359 (EGDRISQLEREHCLNGASFMSRGEFCICPVGFKGARCE) and 394–431 (EYHKCNGHCLNSGHCSMDKESDAMRCECRPNFGGERCE). 5 cysteine pairs are disulfide-bonded: Cys-334/Cys-347, Cys-349/Cys-358, Cys-398/Cys-408, Cys-402/Cys-419, and Cys-421/Cys-430. Residues Asn-433 and Asn-464 are each glycosylated (N-linked (GlcNAc...) asparagine). A helical membrane pass occupies residues 487-507 (PLIIVIVLGLVTTSGLVALTV). Residues 508-605 (HGVRLIYKPK…IHSMEDNLLS (98 aa)) are Cytoplasmic-facing.

It belongs to the cueball family.

The protein resides in the cell membrane. Functionally, has a role in spermatogenesis and oogenesis. The sequence is that of Protein cueball from Drosophila grimshawi (Hawaiian fruit fly).